The sequence spans 280 residues: Putative pyruvate, phosphate dikinase regulatory protein (280 aa).

Position 158–165 (158–165 (GVSRTSKT)) interacts with ADP.

It belongs to the pyruvate, phosphate/water dikinase regulatory protein family. PDRP subfamily.

The catalysed reaction is N(tele)-phospho-L-histidyl/L-threonyl-[pyruvate, phosphate dikinase] + ADP = N(tele)-phospho-L-histidyl/O-phospho-L-threonyl-[pyruvate, phosphate dikinase] + AMP + H(+). The enzyme catalyses N(tele)-phospho-L-histidyl/O-phospho-L-threonyl-[pyruvate, phosphate dikinase] + phosphate + H(+) = N(tele)-phospho-L-histidyl/L-threonyl-[pyruvate, phosphate dikinase] + diphosphate. In terms of biological role, bifunctional serine/threonine kinase and phosphorylase involved in the regulation of the pyruvate, phosphate dikinase (PPDK) by catalyzing its phosphorylation/dephosphorylation. The polypeptide is Putative pyruvate, phosphate dikinase regulatory protein (Lactobacillus gasseri (strain ATCC 33323 / DSM 20243 / BCRC 14619 / CIP 102991 / JCM 1131 / KCTC 3163 / NCIMB 11718 / NCTC 13722 / AM63)).